Reading from the N-terminus, the 76-residue chain is Omega-scoloptoxin(15)-Ssd3c (76 aa).

The N-terminal stretch at 1–23 is a signal peptide; that stretch reads MEKKIIFLVVLVALLALPEFISS.

Belongs to the scoloptoxin-15 family. In terms of processing, contains 2 disulfide bonds. In terms of tissue distribution, expressed by the venom gland.

Its subcellular location is the secreted. Its function is as follows. Voltage-gated calcium channel inhibitor (Cav) (8.6% block at 10 nM), when tested on DRG neurons. This Scolopendra dehaani (Thai centipede) protein is Omega-scoloptoxin(15)-Ssd3c.